Reading from the N-terminus, the 410-residue chain is Cysteine desulfurase IscS (410 aa).

Residues 80–81 (AT), Asn160, Gln188, and 208–210 (SGH) each bind pyridoxal 5'-phosphate. Lys211 is modified (N6-(pyridoxal phosphate)lysine). Thr248 contacts pyridoxal 5'-phosphate. Residue Cys334 is the Cysteine persulfide intermediate of the active site. Position 334 (Cys334) interacts with [2Fe-2S] cluster.

Belongs to the class-V pyridoxal-phosphate-dependent aminotransferase family. NifS/IscS subfamily. In terms of assembly, homodimer. Forms a heterotetramer with IscU, interacts with other sulfur acceptors. It depends on pyridoxal 5'-phosphate as a cofactor.

It is found in the cytoplasm. The catalysed reaction is (sulfur carrier)-H + L-cysteine = (sulfur carrier)-SH + L-alanine. It participates in cofactor biosynthesis; iron-sulfur cluster biosynthesis. Its function is as follows. Master enzyme that delivers sulfur to a number of partners involved in Fe-S cluster assembly, tRNA modification or cofactor biosynthesis. Catalyzes the removal of elemental sulfur atoms from cysteine to produce alanine. Functions as a sulfur delivery protein for Fe-S cluster synthesis onto IscU, an Fe-S scaffold assembly protein, as well as other S acceptor proteins. This chain is Cysteine desulfurase IscS, found in Rickettsia prowazekii (strain Madrid E).